Here is a 404-residue protein sequence, read N- to C-terminus: MSFHRYRPRLPGGELAPMPWPVSLYRVLNHVAWPLEAESGRWTVFLDRLMIFLGFLVFCEHNEVDFHYLIANRQDMDNMLTGLPTYLILVEMQIRCFQLAWHKDRFRALLQRFYAEIYVSEEMEPHLFASIQRQMLATRVNSTVYLLALLNFFLVPVTNVIYHRREMLYKQVYPFDNTQLHFFIPLLVLNFWVGFIITSMLFGELNVMGELMMHLNARYIQLGQDLRRSAQMLLKKSSSLNVAIAYRLNLTHILRRNAALRDFGQRVEKEFTLRIFVMFAFSAGLLCALFFKAFTNPWGNVAYIVWFLAKFMELLALGMLGSILLKTTDELGMMYYTADWEQVIHQSDNVGENVKLMKLVTLAIQLNSRPFFITGLNYFRVSLTAVLKIIQGAFSYFTFLNSMR.

The Cytoplasmic portion of the chain corresponds to 1 to 38 (MSFHRYRPRLPGGELAPMPWPVSLYRVLNHVAWPLEAE). A helical membrane pass occupies residues 39-59 (SGRWTVFLDRLMIFLGFLVFC). Residues 60–67 (EHNEVDFH) are Extracellular-facing. The helical transmembrane segment at 68 to 88 (YLIANRQDMDNMLTGLPTYLI) threads the bilayer. Residues 89–141 (LVEMQIRCFQLAWHKDRFRALLQRFYAEIYVSEEMEPHLFASIQRQMLATRVN) are Cytoplasmic-facing. The chain crosses the membrane as a helical span at residues 142–162 (STVYLLALLNFFLVPVTNVIY). The Extracellular portion of the chain corresponds to 163-181 (HRREMLYKQVYPFDNTQLH). Residues 182–202 (FFIPLLVLNFWVGFIITSMLF) traverse the membrane as a helical segment. Topologically, residues 203–274 (GELNVMGELM…QRVEKEFTLR (72 aa)) are cytoplasmic. The chain crosses the membrane as a helical span at residues 275-295 (IFVMFAFSAGLLCALFFKAFT). At 296 to 303 (NPWGNVAY) the chain is on the extracellular side. The chain crosses the membrane as a helical span at residues 304-324 (IVWFLAKFMELLALGMLGSIL). The Cytoplasmic segment spans residues 325–380 (LKTTDELGMMYYTADWEQVIHQSDNVGENVKLMKLVTLAIQLNSRPFFITGLNYFR). The chain crosses the membrane as a helical span at residues 381–401 (VSLTAVLKIIQGAFSYFTFLN). The Extracellular segment spans residues 402–404 (SMR).

This sequence belongs to the insect chemoreceptor superfamily. Heteromeric odorant receptor channel (TC 1.A.69) family. Or1a subfamily. In terms of assembly, interacts with Orco. Complexes exist early in the endomembrane system in olfactory sensory neurons (OSNs), coupling these complexes to the conserved ciliary trafficking pathway.

Its subcellular location is the cell membrane. Its function is as follows. Odorant receptor which mediates acceptance or avoidance behavior, depending on its substrates. The odorant receptor repertoire encodes a large collection of odor stimuli that vary widely in identity, intensity, and duration. May form a complex with Orco to form odorant-sensing units, providing sensitive and prolonged odorant signaling and calcium permeability. Involved in the behavioral responses to octanol, anisole, and 2-heptanone. In Drosophila melanogaster (Fruit fly), this protein is Odorant receptor 74a (Or74a).